The primary structure comprises 737 residues: Transcription activator MSS11 (737 aa).

The interval 1 to 23 (MDNTTNINTNERSSNTDFSSAPN) is disordered. The LisH domain occupies 51 to 83 (SKQLLYAHIYNYLIKNNYWNSAAKFLSEADLPL). Disordered regions lie at residues 191 to 220 (TQNS…TNRN), 268 to 347 (LQSP…PTNQ), 413 to 439 (GNQN…NANG), and 572 to 660 (KTNT…TKES). Over residues 207–220 (DGSNFNLNDPTNRN) the composition is skewed to polar residues. Positions 269–314 (QSPAQPQQSSQQQIQQPQRQPQHQQQQQQQQQQQQQQQQQQQQQQQ) are enriched in low complexity. Polar residues-rich tracts occupy residues 330 to 347 (SENS…PTNQ), 421 to 439 (TRNN…NANG), and 572 to 585 (KTNT…STSV). The segment covering 590-643 (NNNNNNNNNNNNNNNSNNSNNNNNNNNSNNTPTVSQPSSKRTSSSSTTPNITTT) has biased composition (low complexity). Residues 646–655 (PKRKQRVGKT) are compositionally biased toward basic residues.

This sequence belongs to the MSS11 family. Interacts with FLO8, STE12 and TEC1.

The protein localises to the cytoplasm. It is found in the nucleus. In terms of biological role, transcription factor that regulates pseudohyphal differentiation, invasive growth, floculation, adhesion and starch metabolism in response to nutrient availability. The protein is Transcription activator MSS11 (MSS11) of Saccharomyces cerevisiae (strain YJM789) (Baker's yeast).